Here is a 155-residue protein sequence, read N- to C-terminus: V-type proton ATPase 16 kDa proteolipid subunit c (155 aa).

Topologically, residues 1-10 (MADIKNNPEY) are lumenal. A helical transmembrane segment spans residues 11-33 (SSFFGVMGASSAMVFSAMGAAYG). Residues 34–55 (TAKSGTGIAAMSVMRPELIMKS) lie on the Cytoplasmic side of the membrane. A helical transmembrane segment spans residues 56–76 (IIPVVMAGIIAIYGLVVAVLI). Over 77–92 (ANSLTDGITLYRSFLQ) the chain is Lumenal. Residues 93–114 (LGAGLSVGLSGLAAGFAIGIVG) traverse the membrane as a helical segment. The Cytoplasmic segment spans residues 115 to 131 (DAGVRGTAQQPRLFVGM). A helical membrane pass occupies residues 132–152 (ILILIFAEVLGLYGLIVALIL). The Lumenal portion of the chain corresponds to 153 to 155 (STK).

The protein belongs to the V-ATPase proteolipid subunit family. As to quaternary structure, V-ATPase is a heteromultimeric enzyme made up of two complexes: the ATP-hydrolytic V1 complex and the proton translocation V0 complex. The V1 complex consists of three catalytic AB heterodimers that form a heterohexamer, three peripheral stalks each consisting of EG heterodimers, one central rotor including subunits D and F, and the regulatory subunits C and H. The proton translocation complex V0 consists of the proton transport subunit a, a ring of proteolipid subunits c9c'', rotary subunit d, subunits e and f, and the accessory subunits ATP6AP1/Ac45 and ATP6AP2/PRR. Interacts with the V0 complex V-ATPase subunit a4 ATP6V0A4. Interacts with LASS2. Interacts with RNF182; this interaction leads to ubiquitination and degradation via the proteasome pathway. Ubiquitinated by RNF182, leading to its degradation via the ubiquitin-proteasome pathway.

Its subcellular location is the cytoplasmic vesicle. It is found in the clathrin-coated vesicle membrane. The protein localises to the secretory vesicle. It localises to the synaptic vesicle membrane. Its function is as follows. Proton-conducting pore forming subunit of the V0 complex of vacuolar(H+)-ATPase (V-ATPase), a multisubunit enzyme composed of a peripheral complex (V1) that hydrolyzes ATP and a membrane integral complex (V0) that translocates protons. V-ATPase is responsible for acidifying and maintaining the pH of intracellular compartments and in some cell types, is targeted to the plasma membrane, where it is responsible for acidifying the extracellular environment. The sequence is that of V-type proton ATPase 16 kDa proteolipid subunit c (Atp6v0c) from Mus musculus (Mouse).